Here is a 279-residue protein sequence, read N- to C-terminus: MATRYDDQAIETARQYYNSEDADNFYAIIWGGEDIHIGLYNDDEEPIADASRRTVERMSSLSRQLGPDSYVLDMGAGYGGSARYLAHKYGCKVAALNLSERENERDRQMNKEQGVDHLIEVVDAAFEDVPYDDGVFDLVWSQDSFLHSPDRERVLREASRVLRSGGEFIFTDPMQADDCPEGVIQPILDRIHLETMGTPNFYRQTLRDLGFEEITFEDHTHQLPRHYGRVRRELDRREGELQGHVSAEYIERMKNGLDHWVNGGNKGYLTWGIFYFRKG.

It belongs to the methyltransferase superfamily. Monomer.

The enzyme catalyses sarcosine + 2 S-adenosyl-L-methionine = glycine betaine + 2 S-adenosyl-L-homocysteine + 2 H(+). It carries out the reaction sarcosine + S-adenosyl-L-methionine = N,N-dimethylglycine + S-adenosyl-L-homocysteine + H(+). The catalysed reaction is N,N-dimethylglycine + S-adenosyl-L-methionine = glycine betaine + S-adenosyl-L-homocysteine + H(+). It participates in amine and polyamine biosynthesis; betaine biosynthesis via glycine pathway; betaine from glycine: step 2/3. The protein operates within amine and polyamine biosynthesis; betaine biosynthesis via glycine pathway; betaine from glycine: step 3/3. With respect to regulation, p-chloromercuribenzoate acid inhibits 23% of the SDMT activities on sarcosine and dimethylglycine, and S-adenosylhomocysteine (AdoHcy) inhibits completely GSMT activities. Functionally, catalyzes the methylation of sarcosine and dimethylglycine to dimethylglycine and betaine, respectively, with S-adenosylmethionine (AdoMet) acting as the methyl donor. It has strict specificity for sarcosine and dimethylglycine as the methyl group acceptors. The protein is Sarcosine/dimethylglycine N-methyltransferase of Halorhodospira halochloris (Ectothiorhodospira halochloris).